The primary structure comprises 243 residues: Transcription factor TFIIS homolog (243 aa).

The region spanning 77 to 201 (MRDIIQMMFF…SQQKVAEKTS (125 aa)) is the TFIIS central domain. Residues 202-242 (QLYKCPNCKQRMCTYREVQTRALDEPSTIYCTCKKCGHEFI) form a TFIIS-type zinc finger. Zn(2+) contacts are provided by Cys-206, Cys-209, Cys-234, and Cys-237.

This sequence belongs to the TFS-II family.

Its function is as follows. Putative initiation factor. Necessary for efficient transcription elongation past template-encoded arresting sites. This chain is Transcription factor TFIIS homolog, found in African swine fever virus (isolate Pig/Kenya/KEN-50/1950) (ASFV).